Consider the following 138-residue polypeptide: Large ribosomal subunit protein eL14B (138 aa).

An N-acetylserine modification is found at S2.

This sequence belongs to the eukaryotic ribosomal protein eL14 family. In terms of assembly, component of the large ribosomal subunit (LSU). Mature yeast ribosomes consist of a small (40S) and a large (60S) subunit. The 40S small subunit contains 1 molecule of ribosomal RNA (18S rRNA) and 33 different proteins (encoded by 57 genes). The large 60S subunit contains 3 rRNA molecules (25S, 5.8S and 5S rRNA) and 46 different proteins (encoded by 81 genes). In terms of processing, N-terminally acetylated by acetyltransferase NatA.

It is found in the cytoplasm. In terms of biological role, component of the ribosome, a large ribonucleoprotein complex responsible for the synthesis of proteins in the cell. The small ribosomal subunit (SSU) binds messenger RNAs (mRNAs) and translates the encoded message by selecting cognate aminoacyl-transfer RNA (tRNA) molecules. The large subunit (LSU) contains the ribosomal catalytic site termed the peptidyl transferase center (PTC), which catalyzes the formation of peptide bonds, thereby polymerizing the amino acids delivered by tRNAs into a polypeptide chain. The nascent polypeptides leave the ribosome through a tunnel in the LSU and interact with protein factors that function in enzymatic processing, targeting, and the membrane insertion of nascent chains at the exit of the ribosomal tunnel. The protein is Large ribosomal subunit protein eL14B of Saccharomyces cerevisiae (strain ATCC 204508 / S288c) (Baker's yeast).